The sequence spans 436 residues: Tol-Pal system protein TolB (436 aa).

An N-terminal signal peptide occupies residues 1–28 (MRSFLKPLLTIAAMALGMTAVIPMPAWA).

It belongs to the TolB family. As to quaternary structure, the Tol-Pal system is composed of five core proteins: the inner membrane proteins TolA, TolQ and TolR, the periplasmic protein TolB and the outer membrane protein Pal. They form a network linking the inner and outer membranes and the peptidoglycan layer.

Its subcellular location is the periplasm. Its function is as follows. Part of the Tol-Pal system, which plays a role in outer membrane invagination during cell division and is important for maintaining outer membrane integrity. The sequence is that of Tol-Pal system protein TolB from Mesorhizobium japonicum (strain LMG 29417 / CECT 9101 / MAFF 303099) (Mesorhizobium loti (strain MAFF 303099)).